Consider the following 258-residue polypeptide: F-box/SPRY domain-containing protein 1 (258 aa).

The F-box domain occupies 6 to 54 (TEYAPDIPDNVLELIFSYLKLQDLRNCSLVCKSWNRFLNDENNEVWRAQ). Residues 64–256 (FKTDLLSVVP…ISMVYLGPPL (193 aa)) enclose the B30.2/SPRY domain.

Belongs to the FBXO45/Fsn family. In terms of assembly, component of an E3 ubiquitin ligase complex composed of hiw and Fsn.

It localises to the synapse. It participates in protein modification; protein ubiquitination. Functionally, required in the presynaptic motoneuron to down-regulate the levels of wnd and restrain synaptic terminal growth at the neuromuscular junction (NMJ). In Aedes aegypti (Yellowfever mosquito), this protein is F-box/SPRY domain-containing protein 1.